The chain runs to 159 residues: Transcriptional repressor NrdR (159 aa).

A zinc finger spans residues 3–34; it reads CPFCNAADSKVIDSRLAAEGCQIRRRRECISC. Residues 49–139 enclose the ATP-cone domain; it reads PRVIKSNGKN…VYQDFQDVEA (91 aa).

Belongs to the NrdR family. Zn(2+) is required as a cofactor.

Functionally, negatively regulates transcription of bacterial ribonucleotide reductase nrd genes and operons by binding to NrdR-boxes. This is Transcriptional repressor NrdR from Acinetobacter baylyi (strain ATCC 33305 / BD413 / ADP1).